A 313-amino-acid polypeptide reads, in one-letter code: Formimidoylglutamase (313 aa).

Residues H130, D155, H157, D159, D241, and D243 each coordinate Mn(2+).

The protein belongs to the arginase family. It depends on Mn(2+) as a cofactor.

The catalysed reaction is N-formimidoyl-L-glutamate + H2O = formamide + L-glutamate. It functions in the pathway amino-acid degradation; L-histidine degradation into L-glutamate; L-glutamate from N-formimidoyl-L-glutamate (hydrolase route): step 1/1. Its function is as follows. Catalyzes the conversion of N-formimidoyl-L-glutamate to L-glutamate and formamide. The chain is Formimidoylglutamase from Salmonella heidelberg (strain SL476).